We begin with the raw amino-acid sequence, 447 residues long: UPF0210 protein Ldb1026 (447 aa).

The protein belongs to the UPF0210 family. In terms of assembly, homodimer.

The protein is UPF0210 protein Ldb1026 of Lactobacillus delbrueckii subsp. bulgaricus (strain ATCC 11842 / DSM 20081 / BCRC 10696 / JCM 1002 / NBRC 13953 / NCIMB 11778 / NCTC 12712 / WDCM 00102 / Lb 14).